Here is a 101-residue protein sequence, read N- to C-terminus: Large ribosomal subunit protein uL23 (101 aa).

This sequence belongs to the universal ribosomal protein uL23 family. In terms of assembly, part of the 50S ribosomal subunit. Contacts protein L29, and trigger factor when it is bound to the ribosome.

Functionally, one of the early assembly proteins it binds 23S rRNA. One of the proteins that surrounds the polypeptide exit tunnel on the outside of the ribosome. Forms the main docking site for trigger factor binding to the ribosome. The protein is Large ribosomal subunit protein uL23 of Synechocystis sp. (strain ATCC 27184 / PCC 6803 / Kazusa).